The chain runs to 256 residues: Diaminopimelate epimerase (256 aa).

Residues Asn-11 and Asn-63 each coordinate substrate. Residue Cys-72 is the Proton donor of the active site. Substrate is bound by residues 73 to 74, Asn-169, and 187 to 188; these read GN and ER. Catalysis depends on Cys-197, which acts as the Proton acceptor. 198 to 199 contributes to the substrate binding site; it reads GT.

The protein belongs to the diaminopimelate epimerase family. In terms of assembly, homodimer.

The protein resides in the cytoplasm. The enzyme catalyses (2S,6S)-2,6-diaminopimelate = meso-2,6-diaminopimelate. It functions in the pathway amino-acid biosynthesis; L-lysine biosynthesis via DAP pathway; DL-2,6-diaminopimelate from LL-2,6-diaminopimelate: step 1/1. In terms of biological role, catalyzes the stereoinversion of LL-2,6-diaminopimelate (L,L-DAP) to meso-diaminopimelate (meso-DAP), a precursor of L-lysine and an essential component of the bacterial peptidoglycan. This is Diaminopimelate epimerase from Flavobacterium psychrophilum (strain ATCC 49511 / DSM 21280 / CIP 103535 / JIP02/86).